The chain runs to 396 residues: Deoxyuridine 5'-triphosphate nucleotidohydrolase (396 aa).

Residues 280–282 (RSS) and 380–381 (FG) contribute to the substrate site.

This sequence belongs to the dUTPase family. Mg(2+) serves as cofactor.

The enzyme catalyses dUTP + H2O = dUMP + diphosphate + H(+). Functionally, involved in nucleotide metabolism: produces dUMP, the immediate precursor of thymidine nucleotides and decreases the intracellular concentration of dUTP to avoid uracil incorporation into viral DNA. The protein is Deoxyuridine 5'-triphosphate nucleotidohydrolase of Homo sapiens (Human).